A 393-amino-acid polypeptide reads, in one-letter code: Nucleoside permease NupC (393 aa).

9 helical membrane-spanning segments follow: residues 3 to 23, 32 to 52, 87 to 107, 168 to 188, 191 to 211, 249 to 269, 272 to 292, 334 to 354, and 372 to 392; these read YLIGIIGLIVFLGLAWIASSG, IVVMLILQFILGYILLNTGIG, TTFFMNVLLPIVFISALIGIL, LCASAMSTVSMSIVGAYMTML, EYVVTALVLNLFGGFIIASII, VVVAAMLIGFVAIIALINGIF, VFGISFQGILGYVFAPFAFLV, AIVSVFLVSFANFSSIGIIAG, and LKLLYGATLVSFLSAAIVGLI.

It belongs to the concentrative nucleoside transporter (CNT) (TC 2.A.41) family.

It localises to the cell membrane. Transport of the pyrimidine nucleoside uridine. This is Nucleoside permease NupC from Bacillus subtilis (strain 168).